The sequence spans 127 residues: Small ribosomal subunit protein uS11 (127 aa).

It belongs to the universal ribosomal protein uS11 family. As to quaternary structure, part of the 30S ribosomal subunit. Interacts with proteins S7 and S18. Binds to IF-3.

Its function is as follows. Located on the platform of the 30S subunit, it bridges several disparate RNA helices of the 16S rRNA. Forms part of the Shine-Dalgarno cleft in the 70S ribosome. The chain is Small ribosomal subunit protein uS11 from Streptococcus thermophilus (strain CNRZ 1066).